The following is a 62-amino-acid chain: Large ribosomal subunit protein uL29 (62 aa).

It belongs to the universal ribosomal protein uL29 family.

This chain is Large ribosomal subunit protein uL29, found in Oleidesulfovibrio alaskensis (strain ATCC BAA-1058 / DSM 17464 / G20) (Desulfovibrio alaskensis).